The chain runs to 161 residues: Cytochrome c-type biogenesis protein CcmE (161 aa).

Over 1-8 the chain is Cytoplasmic; the sequence is MNPRRKKR. A helical; Signal-anchor for type II membrane protein membrane pass occupies residues 9–29; it reads LTLAVALVFGLGATIGLMLYA. Residues 30 to 161 lie on the Periplasmic side of the membrane; the sequence is LSQNMDLFYT…SDEQKQGRVQ (132 aa). The heme site is built by His129 and Tyr133.

The protein belongs to the CcmE/CycJ family.

Its subcellular location is the cell inner membrane. Heme chaperone required for the biogenesis of c-type cytochromes. Transiently binds heme delivered by CcmC and transfers the heme to apo-cytochromes in a process facilitated by CcmF and CcmH. The protein is Cytochrome c-type biogenesis protein CcmE of Photobacterium profundum (strain SS9).